A 444-amino-acid chain; its full sequence is Zinc finger CCCH domain-containing protein 63 (444 aa).

C3H1-type zinc fingers lie at residues R56–D84, R101–E129, and R147–P175. The segment at G251–T276 is disordered. 2 consecutive C3H1-type zinc fingers follow at residues R309–E337 and R355–G383. The segment at P405–S444 is disordered.

The sequence is that of Zinc finger CCCH domain-containing protein 63 from Oryza sativa subsp. japonica (Rice).